A 31-amino-acid polypeptide reads, in one-letter code: Protamine-Z (31 aa).

The segment at 1-31 (ARRRRSRRASRPVRRRRPRRVSRRRRARRRR) is disordered.

As to expression, testis.

It localises to the nucleus. Its subcellular location is the chromosome. Its function is as follows. Protamines substitute for histones in the chromatin of sperm during the haploid phase of spermatogenesis. They compact sperm DNA into a highly condensed, stable and inactive complex. This Clupea harengus (Atlantic herring) protein is Protamine-Z.